We begin with the raw amino-acid sequence, 230 residues long: Secretory carrier-associated membrane protein 4 (230 aa).

The Cytoplasmic segment spans residues 1 to 39 (MAGKENNFPPLPHFLPLKPCFYQDFSDEIPVEHQVLVKR). 4 helical membrane passes run 40-60 (IYRL…ACLA), 61-81 (WWIA…LVLF), 106-126 (MAFF…AIGF), and 149-169 (VVML…AITI). The Cytoplasmic portion of the chain corresponds to 170-230 (VKVHRIYRGA…SYSTSGSQWP (61 aa)). Residue T194 is modified to Phosphothreonine. Positions 197–230 (NPPSREAQFNSFSGNSLPEYPTVPSYSTSGSQWP) are disordered. Polar residues-rich tracts occupy residues 203-212 (AQFNSFSGNS) and 220-230 (PSYSTSGSQWP).

It belongs to the SCAMP family.

It is found in the membrane. In terms of biological role, probably involved in membrane protein trafficking. The polypeptide is Secretory carrier-associated membrane protein 4 (Scamp4) (Rattus norvegicus (Rat)).